The chain runs to 87 residues: Small ribosomal subunit protein uS15 (87 aa).

It belongs to the universal ribosomal protein uS15 family. As to quaternary structure, part of the 30S ribosomal subunit. Forms a bridge to the 50S subunit in the 70S ribosome, contacting the 23S rRNA.

Its function is as follows. One of the primary rRNA binding proteins, it binds directly to 16S rRNA where it helps nucleate assembly of the platform of the 30S subunit by binding and bridging several RNA helices of the 16S rRNA. In terms of biological role, forms an intersubunit bridge (bridge B4) with the 23S rRNA of the 50S subunit in the ribosome. The sequence is that of Small ribosomal subunit protein uS15 from Clostridium beijerinckii (strain ATCC 51743 / NCIMB 8052) (Clostridium acetobutylicum).